The sequence spans 258 residues: 6-carboxyhexanoate--CoA ligase (258 aa).

Belongs to the BioW family. As to quaternary structure, homodimer. Mg(2+) serves as cofactor.

The enzyme catalyses heptanedioate + ATP + CoA = 6-carboxyhexanoyl-CoA + AMP + diphosphate. The protein operates within metabolic intermediate metabolism; pimeloyl-CoA biosynthesis; pimeloyl-CoA from pimelate: step 1/1. In terms of biological role, catalyzes the transformation of pimelate into pimeloyl-CoA with concomitant hydrolysis of ATP to AMP. The sequence is that of 6-carboxyhexanoate--CoA ligase from Bacillus spizizenii (strain ATCC 23059 / NRRL B-14472 / W23) (Bacillus subtilis subsp. spizizenii).